A 207-amino-acid polypeptide reads, in one-letter code: Suppressor of IKBKE 1 (207 aa).

Coiled-coil stretches lie at residues 70 to 102 and 162 to 193; these read HILL…DALE and QFCK…SLQA.

It belongs to the SIKE family. In terms of assembly, interacts with IKBKE and TBK1 via its coiled coil region. Interaction with TBK1 is disrupted upon viral infection or TLR3 stimulation. Interacts with CDC42BPB. Interacts with SIKE1 which mediates association with the STRIPAK core complex composed of PP2A catalytic and scaffolding subunits, the striatins (PP2A regulatory subunits), the striatin-associated proteins MOB4, STRIP1 and STRIP2, PDCD10 and members of the STE20 kinases, such as STK24 and STK26. Widely expressed. Expressed in brain, heart, skeletal muscle, colon, thymus, spleen, kidney, liver, small intestine, placenta, lung and leukocytes. Present in all cell lines tested (at protein level).

Its subcellular location is the cytoplasm. Physiological suppressor of IKK-epsilon and TBK1 that plays an inhibitory role in virus- and TLR3-triggered IRF3. Inhibits TLR3-mediated activation of interferon-stimulated response elements (ISRE) and the IFN-beta promoter. May act by disrupting the interactions of IKBKE or TBK1 with TICAM1/TRIF, IRF3 and RIGI. Does not inhibit NF-kappa-B activation pathways. Associates with the striatin-interacting phosphatase and kinase (STRIPAK) core complex, forming the extended (SIKE1:SLMAP)STRIPAK complex. The (SIKE1:SLMAP)STRIPAK complex dephosphorylates STK3 leading to the inhibition of Hippo signaling and the control of cell growth. This chain is Suppressor of IKBKE 1, found in Homo sapiens (Human).